A 557-amino-acid polypeptide reads, in one-letter code: Formate--tetrahydrofolate ligase (557 aa).

An ATP-binding site is contributed by Thr-65–Thr-72.

The protein belongs to the formate--tetrahydrofolate ligase family.

The enzyme catalyses (6S)-5,6,7,8-tetrahydrofolate + formate + ATP = (6R)-10-formyltetrahydrofolate + ADP + phosphate. It functions in the pathway one-carbon metabolism; tetrahydrofolate interconversion. In Acidiphilium cryptum (strain JF-5), this protein is Formate--tetrahydrofolate ligase.